The chain runs to 575 residues: Isocitrate dehydrogenase kinase/phosphatase (575 aa).

Residues 315 to 321 (APGVKGM) and Lys-336 contribute to the ATP site. The active site involves Asp-371.

It belongs to the AceK family.

It is found in the cytoplasm. The enzyme catalyses L-seryl-[isocitrate dehydrogenase] + ATP = O-phospho-L-seryl-[isocitrate dehydrogenase] + ADP + H(+). In terms of biological role, bifunctional enzyme which can phosphorylate or dephosphorylate isocitrate dehydrogenase (IDH) on a specific serine residue. This is a regulatory mechanism which enables bacteria to bypass the Krebs cycle via the glyoxylate shunt in response to the source of carbon. When bacteria are grown on glucose, IDH is fully active and unphosphorylated, but when grown on acetate or ethanol, the activity of IDH declines drastically concomitant with its phosphorylation. This is Isocitrate dehydrogenase kinase/phosphatase from Yersinia enterocolitica serotype O:8 / biotype 1B (strain NCTC 13174 / 8081).